Consider the following 303-residue polypeptide: Diaminopimelate epimerase (303 aa).

Residues N15, Q47, and N67 each coordinate substrate. The active-site Proton donor is the C76. Substrate-binding positions include 77–78 (GN), N163, N197, and 215–216 (ER). Residue C224 is the Proton acceptor of the active site. 225 to 226 (GS) provides a ligand contact to substrate. The segment at 279-303 (DPATGEWSRDTQGLQGSGNADRGTA) is disordered.

This sequence belongs to the diaminopimelate epimerase family. As to quaternary structure, homodimer.

Its subcellular location is the cytoplasm. The catalysed reaction is (2S,6S)-2,6-diaminopimelate = meso-2,6-diaminopimelate. It functions in the pathway amino-acid biosynthesis; L-lysine biosynthesis via DAP pathway; DL-2,6-diaminopimelate from LL-2,6-diaminopimelate: step 1/1. In terms of biological role, catalyzes the stereoinversion of LL-2,6-diaminopimelate (L,L-DAP) to meso-diaminopimelate (meso-DAP), a precursor of L-lysine and an essential component of the bacterial peptidoglycan. In Brucella canis (strain ATCC 23365 / NCTC 10854 / RM-666), this protein is Diaminopimelate epimerase.